A 316-amino-acid polypeptide reads, in one-letter code: 4-hydroxy-3-methylbut-2-enyl diphosphate reductase (316 aa).

A [4Fe-4S] cluster-binding site is contributed by cysteine 12. (2E)-4-hydroxy-3-methylbut-2-enyl diphosphate contacts are provided by histidine 41 and histidine 74. The dimethylallyl diphosphate site is built by histidine 41 and histidine 74. The isopentenyl diphosphate site is built by histidine 41 and histidine 74. Cysteine 96 provides a ligand contact to [4Fe-4S] cluster. A (2E)-4-hydroxy-3-methylbut-2-enyl diphosphate-binding site is contributed by histidine 124. Histidine 124 serves as a coordination point for dimethylallyl diphosphate. Histidine 124 is an isopentenyl diphosphate binding site. Glutamate 126 acts as the Proton donor in catalysis. A (2E)-4-hydroxy-3-methylbut-2-enyl diphosphate-binding site is contributed by threonine 169. Cysteine 199 serves as a coordination point for [4Fe-4S] cluster. (2E)-4-hydroxy-3-methylbut-2-enyl diphosphate contacts are provided by serine 227, serine 228, asparagine 229, and serine 271. Dimethylallyl diphosphate is bound by residues serine 227, serine 228, asparagine 229, and serine 271. Isopentenyl diphosphate is bound by residues serine 227, serine 228, asparagine 229, and serine 271.

It belongs to the IspH family. The cofactor is [4Fe-4S] cluster.

It carries out the reaction isopentenyl diphosphate + 2 oxidized [2Fe-2S]-[ferredoxin] + H2O = (2E)-4-hydroxy-3-methylbut-2-enyl diphosphate + 2 reduced [2Fe-2S]-[ferredoxin] + 2 H(+). The enzyme catalyses dimethylallyl diphosphate + 2 oxidized [2Fe-2S]-[ferredoxin] + H2O = (2E)-4-hydroxy-3-methylbut-2-enyl diphosphate + 2 reduced [2Fe-2S]-[ferredoxin] + 2 H(+). It functions in the pathway isoprenoid biosynthesis; dimethylallyl diphosphate biosynthesis; dimethylallyl diphosphate from (2E)-4-hydroxy-3-methylbutenyl diphosphate: step 1/1. Its pathway is isoprenoid biosynthesis; isopentenyl diphosphate biosynthesis via DXP pathway; isopentenyl diphosphate from 1-deoxy-D-xylulose 5-phosphate: step 6/6. Functionally, catalyzes the conversion of 1-hydroxy-2-methyl-2-(E)-butenyl 4-diphosphate (HMBPP) into a mixture of isopentenyl diphosphate (IPP) and dimethylallyl diphosphate (DMAPP). Acts in the terminal step of the DOXP/MEP pathway for isoprenoid precursor biosynthesis. This is 4-hydroxy-3-methylbut-2-enyl diphosphate reductase from Stenotrophomonas maltophilia (strain K279a).